A 461-amino-acid polypeptide reads, in one-letter code: Phosphatidate cytidylyltransferase 1 (461 aa).

Positions 1–67 (MLELRHRGSC…IPEIPPSSDR (67 aa)) are disordered. Arg7 bears the Omega-N-methylarginine mark. Over residues 20 to 56 (PHREGEAAGGDHETESTSDKETDIDDRYGDLDSRTDS) the composition is skewed to basic and acidic residues. Residues Ser35 and Ser37 each carry the phosphoserine modification. The next 6 membrane-spanning stretches (helical) occupy residues 96–116 (MISL…LLVL), 149–169 (FLLC…FATF), 183–203 (HRFI…LSLV), 230–250 (LVIQ…SSVI), 279–299 (GFIG…YVLS), and 357–377 (IALS…ASGF).

Belongs to the CDS family. As to quaternary structure, homodimer. Interacts with FOS; this interaction may enhance catalytic activity. Mg(2+) is required as a cofactor. As to expression, expressed in adult tissues such as placenta, brain, small intestine, ovary, testis and prostate. Highly expressed in fetal kidney, lung and brain. Lower level in fetal liver.

It localises to the endoplasmic reticulum membrane. The enzyme catalyses a 1,2-diacyl-sn-glycero-3-phosphate + CTP + H(+) = a CDP-1,2-diacyl-sn-glycerol + diphosphate. It carries out the reaction 1-octadecanoyl-2-(5Z,8Z,11Z,14Z-eicosatetraenoyl)-sn-glycero-3-phosphate + CTP + H(+) = 1-octadecanoyl-2-(5Z,8Z,11Z,14Z-eicosatetraenoyl)-sn-glycero-3-cytidine-5'-diphosphate + diphosphate. The catalysed reaction is 1-octadecanoyl-2-(9Z,12Z-octadecadienoyl)-sn-glycero-3-phosphate + CTP + H(+) = 1-octadecanoyl-2-(9Z,12Z-octadecadienoyl)-sn-glycero-3-cytidine-5'-diphosphate + diphosphate. It catalyses the reaction 1-hexadecanoyl-2-(5Z,8Z,11Z,14Z-eicosatetraenoyl)-sn-glycero-3-phosphate + CTP + H(+) = 1-hexadecanoyl-2-(5Z,8Z,11Z,14Z-eicosatetraenoyl)-sn-glycero-3-cytidine-5'-diphosphate + diphosphate. The enzyme catalyses 1,2-di-(5Z,8Z,11Z,14Z)-eicosatetraenoyl-sn-glycero-3-phosphate + CTP + H(+) = 1,2-di-(5Z,8Z,11Z,14Z-eicosatetraenoyl)-sn-glycero-3-cytidine-5'-diphosphate + diphosphate. It carries out the reaction 1-octadecanoyl-2-(9Z-octadecenoyl)-sn-glycero-3-phosphate + CTP + H(+) = 1-octadecanoyl-2-(9Z-octadecenoyl)-sn-glycero-3-cytidine-5'-diphosphate + diphosphate. The catalysed reaction is 1-octadecanoyl-2-(4Z,7Z,10Z,13Z,16Z,19Z-docosahexaenoyl)-sn-glycero-3-phosphate + CTP + H(+) = 1-octadecanoyl-2-(4Z,7Z,10Z,13Z,16Z,19Z-docosahexaenoyl)-sn-glycero-3-cytidine-5'-diphosphate + diphosphate. It catalyses the reaction 1,2-di-(9Z,12Z-octadecadienoyl)-sn-glycero-3-phosphate + CTP + H(+) = 1,2-di-(9Z,12Z-octadecadienoyl)-sn-glycero-3-cytidine-5'-diphosphate + diphosphate. The enzyme catalyses 1,2-di-(9Z-octadecenoyl)-sn-glycero-3-phosphate + CTP + H(+) = 1,2-di-(9Z-octadecenoyl)-sn-glycero-3-cytidine-5'-diphosphate + diphosphate. The protein operates within phospholipid metabolism; CDP-diacylglycerol biosynthesis; CDP-diacylglycerol from sn-glycerol 3-phosphate: step 3/3. With respect to regulation, inhibited by its anionic phospholipid end products, with phosphatidylinositol-(4,5)- bisphosphate showing the strongest inhibition. In terms of biological role, catalyzes the conversion of phosphatidic acid (PA) to CDP-diacylglycerol (CDP-DAG), an essential intermediate in the synthesis of phosphatidylglycerol, cardiolipin and phosphatidylinositol. Exhibits almost no acyl chain preference for PA, showing no discrimination for the sn-1/sn-2 acyl chain composition of PAs. Plays an important role in regulating the growth of lipid droplets which are storage organelles at the center of lipid and energy homeostasis. Positively regulates the differentiation and development of adipocytes. The sequence is that of Phosphatidate cytidylyltransferase 1 from Homo sapiens (Human).